We begin with the raw amino-acid sequence, 364 residues long: Inactive protein RESTRICTED TEV MOVEMENT 2 (364 aa).

The region spanning 14 to 121 (VQYEDFVPKS…LPETSRTEAA (108 aa)) is the sHSP domain. The stretch at 129–133 (LEEKR) is one A-1 repeat. Positions 129 to 220 (LEEKRLLEES…LEERRLEERK (92 aa)) are 6 X 5 AA repeats A of L-E-E-[SKR]-[ERK]. The A-2 repeat unit spans residues 135-139 (LEESR). Residues 156-160 (LEEKE) form an A-3 repeat. The stretch at 163–176 (IRKLQEEAKAKEEA) is one B-1 repeat. The 3 X 14 AA repeats B of [IMA]-[RK]-K-L-Q-E-E-A-K-A-K-E-[EK]-[LA] stretch occupies residues 163–206 (IRKLQEEAKAKEEAEMRKLQEEAKAKEEAAAKKLQEEIEAKEKL). Residues 178–191 (MRKLQEEAKAKEEA) form a B-2 repeat. The stretch at 193–205 (AKKLQEEIEAKEK) is one B-3 repeat. One copy of the A-4 repeat lies at 206 to 210 (LEERK). The stretch at 211 to 215 (LEERR) is one A-5 repeat. The stretch at 216-220 (LEERK) is one A-6 repeat. The helical transmembrane segment at 322 to 342 (LMMNVGVAALVIFALGAYVSY) threads the bilayer. A disordered region spans residues 345–364 (CSSSSSSSSPSSSSSSTKPE). Positions 346 to 364 (SSSSSSSSPSSSSSSTKPE) are enriched in low complexity.

It belongs to the small heat shock protein (HSP20) family.

It is found in the cell membrane. Seems to not be involved in heat resistance. Unable to mediate restriction of long-distance movement of the pathogenic tobacco etch virus (TEV) without causing a hypersensitive response or inducing systemic acquired resistance. The chain is Inactive protein RESTRICTED TEV MOVEMENT 2 (RTM2) from Arabidopsis thaliana (Mouse-ear cress).